Reading from the N-terminus, the 455-residue chain is Argininosuccinate lyase (455 aa).

This sequence belongs to the lyase 1 family. Argininosuccinate lyase subfamily.

Its subcellular location is the cytoplasm. The enzyme catalyses 2-(N(omega)-L-arginino)succinate = fumarate + L-arginine. It functions in the pathway amino-acid biosynthesis; L-arginine biosynthesis; L-arginine from L-ornithine and carbamoyl phosphate: step 3/3. The polypeptide is Argininosuccinate lyase (Caulobacter vibrioides (strain ATCC 19089 / CIP 103742 / CB 15) (Caulobacter crescentus)).